Consider the following 742-residue polypeptide: Polyribonucleotide nucleotidyltransferase (742 aa).

The Mg(2+) site is built by aspartate 515 and aspartate 521. One can recognise a KH domain in the interval proline 581–valine 640. The 73-residue stretch at glycine 652–valine 724 folds into the S1 motif domain.

It belongs to the polyribonucleotide nucleotidyltransferase family. Mg(2+) serves as cofactor.

The protein resides in the cytoplasm. It catalyses the reaction RNA(n+1) + phosphate = RNA(n) + a ribonucleoside 5'-diphosphate. Its function is as follows. Involved in mRNA degradation. Catalyzes the phosphorolysis of single-stranded polyribonucleotides processively in the 3'- to 5'-direction. The chain is Polyribonucleotide nucleotidyltransferase from Nocardioides sp. (strain ATCC BAA-499 / JS614).